Consider the following 663-residue polypeptide: Bicarbonate transport ATP-binding protein CmpC (663 aa).

The 235-residue stretch at 5 to 239 (VAVENIEKSF…RPRKRMDVVH (235 aa)) folds into the ABC transporter domain. Residue 42–49 (GHSGCGKS) coordinates ATP. The tract at residues 281–663 (LEIGYVPLMA…LDQPRPIAAA (383 aa)) is cmpA-like.

This sequence belongs to the ABC transporter superfamily. Nitrate/nitrite/cyanate uptake transporter (NitT) (TC 3.A.1.16) family. The complex is composed of two ATP-binding proteins (CmpC and CmpD), a transmembrane protein (CmpB) and a solute-binding protein (CmpA).

It localises to the cell inner membrane. In terms of biological role, part of the ABC transporter complex CmpABCD involved in bicarbonate transport. Responsible for energy coupling to the transport system. The protein is Bicarbonate transport ATP-binding protein CmpC (cmpC) of Synechococcus elongatus (strain ATCC 33912 / PCC 7942 / FACHB-805) (Anacystis nidulans R2).